The following is a 256-amino-acid chain: 2,3,4,5-tetrahydropyridine-2,6-dicarboxylate N-acetyltransferase (256 aa).

Belongs to the transferase hexapeptide repeat family. DapH subfamily.

The enzyme catalyses (S)-2,3,4,5-tetrahydrodipicolinate + acetyl-CoA + H2O = L-2-acetamido-6-oxoheptanedioate + CoA. The protein operates within amino-acid biosynthesis; L-lysine biosynthesis via DAP pathway; LL-2,6-diaminopimelate from (S)-tetrahydrodipicolinate (acetylase route): step 1/3. Catalyzes the transfer of an acetyl group from acetyl-CoA to tetrahydrodipicolinate. This chain is 2,3,4,5-tetrahydropyridine-2,6-dicarboxylate N-acetyltransferase, found in Lactococcus lactis subsp. lactis (strain IL1403) (Streptococcus lactis).